A 129-amino-acid chain; its full sequence is Small ribosomal subunit protein uS11 (129 aa).

This sequence belongs to the universal ribosomal protein uS11 family. As to quaternary structure, part of the 30S ribosomal subunit. Interacts with proteins S7 and S18. Binds to IF-3.

Functionally, located on the platform of the 30S subunit, it bridges several disparate RNA helices of the 16S rRNA. Forms part of the Shine-Dalgarno cleft in the 70S ribosome. The sequence is that of Small ribosomal subunit protein uS11 from Geobacillus kaustophilus (strain HTA426).